The sequence spans 358 residues: Aminomethyltransferase (358 aa).

The protein belongs to the GcvT family. As to quaternary structure, the glycine cleavage system is composed of four proteins: P, T, L and H.

It carries out the reaction N(6)-[(R)-S(8)-aminomethyldihydrolipoyl]-L-lysyl-[protein] + (6S)-5,6,7,8-tetrahydrofolate = N(6)-[(R)-dihydrolipoyl]-L-lysyl-[protein] + (6R)-5,10-methylene-5,6,7,8-tetrahydrofolate + NH4(+). The glycine cleavage system catalyzes the degradation of glycine. In Francisella tularensis subsp. mediasiatica (strain FSC147), this protein is Aminomethyltransferase.